The following is a 108-amino-acid chain: Urease subunit beta (108 aa).

The protein belongs to the urease beta subunit family. Heterotrimer of UreA (gamma), UreB (beta) and UreC (alpha) subunits. Three heterotrimers associate to form the active enzyme.

The protein resides in the cytoplasm. The catalysed reaction is urea + 2 H2O + H(+) = hydrogencarbonate + 2 NH4(+). It participates in nitrogen metabolism; urea degradation; CO(2) and NH(3) from urea (urease route): step 1/1. The protein is Urease subunit beta of Nocardia farcinica (strain IFM 10152).